Here is a 311-residue protein sequence, read N- to C-terminus: NAD kinase (311 aa).

Catalysis depends on aspartate 67, which acts as the Proton acceptor. NAD(+) contacts are provided by residues 67 to 68, arginine 72, 140 to 141, arginine 151, aspartate 170, 181 to 186, and glutamine 240; these read DG, ND, and TAYSLS. Residues 278–287 show a composition bias toward basic and acidic residues; the sequence is LKEGGSRQDD. The disordered stretch occupies residues 278–311; the sequence is LKEGGSRQDDENPAATVNPETDSKYPHSHPGSTG.

Belongs to the NAD kinase family. A divalent metal cation serves as cofactor.

Its subcellular location is the cytoplasm. The enzyme catalyses NAD(+) + ATP = ADP + NADP(+) + H(+). Involved in the regulation of the intracellular balance of NAD and NADP, and is a key enzyme in the biosynthesis of NADP. Catalyzes specifically the phosphorylation on 2'-hydroxyl of the adenosine moiety of NAD to yield NADP. The chain is NAD kinase from Moorella thermoacetica (strain ATCC 39073 / JCM 9320).